A 310-amino-acid chain; its full sequence is Porphobilinogen deaminase (310 aa).

Position 242 is an S-(dipyrrolylmethanemethyl)cysteine (Cys242).

It belongs to the HMBS family. In terms of assembly, monomer. It depends on dipyrromethane as a cofactor.

The catalysed reaction is 4 porphobilinogen + H2O = hydroxymethylbilane + 4 NH4(+). It functions in the pathway porphyrin-containing compound metabolism; protoporphyrin-IX biosynthesis; coproporphyrinogen-III from 5-aminolevulinate: step 2/4. Tetrapolymerization of the monopyrrole PBG into the hydroxymethylbilane pre-uroporphyrinogen in several discrete steps. This Shewanella pealeana (strain ATCC 700345 / ANG-SQ1) protein is Porphobilinogen deaminase.